The sequence spans 274 residues: Putative pyruvate, phosphate dikinase regulatory protein (274 aa).

153–160 (GISRTSKT) provides a ligand contact to ADP.

Belongs to the pyruvate, phosphate/water dikinase regulatory protein family. PDRP subfamily.

It catalyses the reaction N(tele)-phospho-L-histidyl/L-threonyl-[pyruvate, phosphate dikinase] + ADP = N(tele)-phospho-L-histidyl/O-phospho-L-threonyl-[pyruvate, phosphate dikinase] + AMP + H(+). The enzyme catalyses N(tele)-phospho-L-histidyl/O-phospho-L-threonyl-[pyruvate, phosphate dikinase] + phosphate + H(+) = N(tele)-phospho-L-histidyl/L-threonyl-[pyruvate, phosphate dikinase] + diphosphate. Functionally, bifunctional serine/threonine kinase and phosphorylase involved in the regulation of the pyruvate, phosphate dikinase (PPDK) by catalyzing its phosphorylation/dephosphorylation. This is Putative pyruvate, phosphate dikinase regulatory protein from Bartonella tribocorum (strain CIP 105476 / IBS 506).